A 1091-amino-acid chain; its full sequence is Ubiquitin carboxyl-terminal hydrolase 36 (1091 aa).

Positions 115–152 (ANGHDNNGRKLSDHPNQNHNHANPNGHHANPNELPKPK) are disordered. The span at 128–146 (HPNQNHNHANPNGHHANPN) shows a compositional bias: low complexity. The region spanning 176–484 (SGMINAGNTC…NAYIMFYELD (309 aa)) is the USP domain. The active-site Nucleophile is Cys-185. The active-site Proton acceptor is His-443. Residues Ser-518 and Ser-522 each carry the phosphoserine modification. Disordered regions lie at residues 523 to 572 (PAKF…KSPL), 594 to 892 (PTAN…ELLK), 972 to 1007 (QRDLADDEENEMDRGRQRKVKSGSAKISNSTPGYNP), and 1068 to 1091 (LAAGGGFTRRQPTHSAQQQQQQQS). Residues 547 to 572 (TTIQFKPQHQPSHQQNGVQQSAKSPL) show a composition bias toward polar residues. A compositionally biased stretch (low complexity) spans 594–612 (PTANGNKSSSNHSNHKSVN). Basic and acidic residues predominate over residues 643–652 (KMDDCMDSGK). A compositionally biased stretch (low complexity) spans 653-667 (PKSPVKTPVKTPLKS). Phosphothreonine occurs at positions 659 and 663. Phosphoserine occurs at positions 673 and 675. Residues 691–702 (RSSDSSDSEHEP) show a composition bias toward basic and acidic residues. Positions 703-727 (TTSSVQLNGHSKTNGSLSNGSSKST) are enriched in polar residues. Residue Ser-749 is modified to Phosphoserine. A compositionally biased stretch (acidic residues) spans 749–759 (SEDDDDDEDEP). Low complexity predominate over residues 769–780 (PQKQSQSQSRSG). The span at 781–790 (PPSPKTPPSP) shows a compositional bias: pro residues. Residue Ser-783 is modified to Phosphoserine. A Phosphothreonine modification is found at Thr-786. Phosphoserine is present on Ser-789. The span at 806–821 (DGDDDEDDDDDDDEVV) shows a compositional bias: acidic residues. Thr-829 is modified (phosphothreonine). Composition is skewed to polar residues over residues 838-850 (FASSKTATDSPTT) and 863-886 (AIKTQQQPRAGNGYQSEATANGGT). Ser-847 carries the post-translational modification Phosphoserine. Position 850 is a phosphothreonine (Thr-850).

Belongs to the peptidase C19 family. In terms of assembly, interacts with atms/PAF1, but not with CycT.

The protein resides in the nucleus. The protein localises to the nucleolus. It catalyses the reaction Thiol-dependent hydrolysis of ester, thioester, amide, peptide and isopeptide bonds formed by the C-terminal Gly of ubiquitin (a 76-residue protein attached to proteins as an intracellular targeting signal).. Functionally, required for maintaining multiple types of adult stem cells, including male and female germline, epithelial follicle cell and intestinal stem cells. May function as a transcriptional repressor by continually deubiquiting histone H2B at the promoters of genes critical for cellular differentiation, thereby preventing histone H3 'Lys-4' trimethylation (H3K4). Controls selective autophagy activation by ubiquitinated proteins. The chain is Ubiquitin carboxyl-terminal hydrolase 36 (Usp36) from Drosophila ananassae (Fruit fly).